Consider the following 294-residue polypeptide: Elongation factor Ts (294 aa).

Residues 81–84 form an involved in Mg(2+) ion dislocation from EF-Tu region; that stretch reads TDFV.

It belongs to the EF-Ts family.

Its subcellular location is the cytoplasm. Associates with the EF-Tu.GDP complex and induces the exchange of GDP to GTP. It remains bound to the aminoacyl-tRNA.EF-Tu.GTP complex up to the GTP hydrolysis stage on the ribosome. The polypeptide is Elongation factor Ts (tsf) (Mycoplasmopsis pulmonis (strain UAB CTIP) (Mycoplasma pulmonis)).